The chain runs to 397 residues: P2X purinoceptor 3 (397 aa).

Topologically, residues 1-20 are cytoplasmic; that stretch reads MNCISDFFTYETTKSVVVKS. A helical membrane pass occupies residues 21 to 43; sequence WTIGIINRAVQLLIISYFVGWVF. At 44-322 the chain is on the extracellular side; sequence LHEKAYQVRD…AGKFNIIPTI (279 aa). ATP-binding residues include Lys63 and Lys65. 3 disulfide bridges follow: Cys107–Cys153, Cys116–Cys137, and Cys122–Cys147. Residue Glu111 participates in Mg(2+) binding. An N-linked (GlcNAc...) asparagine glycan is attached at Asn139. Asp158 serves as a coordination point for Mg(2+). Asp158 provides a ligand contact to Ca(2+). Asn170 carries N-linked (GlcNAc...) asparagine glycosylation. Thr172 provides a ligand contact to ATP. N-linked (GlcNAc...) asparagine glycosylation occurs at Asn194. 2 disulfides stabilise this stretch: Cys203–Cys213 and Cys247–Cys256. ATP contacts are provided by Ser275, Asn279, and Arg281. Asn290 carries N-linked (GlcNAc...) asparagine glycosylation. ATP is bound at residue Lys299. Residues 323 to 341 form a helical membrane-spanning segment; the sequence is ISSVAAFTSVGVGTVLCDI. Residues 342–397 are Cytoplasmic-facing; sequence ILLNFLKGADHYKARKFEEVTETTLKGTASTNPVFASDQATVEKQSTDSGAYSIGH.

Belongs to the P2X receptor family. In terms of assembly, homotrimer. Forms heterotrimer with P2RX2. Heterotrimeric P2RX2/3 has a ligand dose-response profile that is distinct from either homotrimeric P2RX2 or P2RX3. In terms of tissue distribution, selectively expressed in sensory ganglia.

The protein resides in the cell membrane. It catalyses the reaction Ca(2+)(in) = Ca(2+)(out). The enzyme catalyses Na(+)(in) = Na(+)(out). Has high sensitivity to ATP. Fast activation by external ATP. Exhibits rapid desensitization. Sensitives to the ATP agonist:alpha/beta-methylene-ATP. Subject to allosteric inhibition by AF-219. Mg(2+) and Ca(2+) slow deactivation of P2RX3. Its function is as follows. Extracellular ATP-activated non-selective cation channel. Plays particularly important role in sensory neurons where its activation is critical for gustatory, nociceptive responses, visceral reflexes and sensory hypersensitization. The polypeptide is P2X purinoceptor 3 (P2rx3) (Rattus norvegicus (Rat)).